Here is a 356-residue protein sequence, read N- to C-terminus: Histidinol-phosphate aminotransferase 2 (356 aa).

Position 213 is an N6-(pyridoxal phosphate)lysine (Lys-213).

The protein belongs to the class-II pyridoxal-phosphate-dependent aminotransferase family. Histidinol-phosphate aminotransferase subfamily. In terms of assembly, homodimer. The cofactor is pyridoxal 5'-phosphate.

It carries out the reaction L-histidinol phosphate + 2-oxoglutarate = 3-(imidazol-4-yl)-2-oxopropyl phosphate + L-glutamate. It functions in the pathway amino-acid biosynthesis; L-histidine biosynthesis; L-histidine from 5-phospho-alpha-D-ribose 1-diphosphate: step 7/9. The polypeptide is Histidinol-phosphate aminotransferase 2 (Burkholderia mallei (strain ATCC 23344)).